Consider the following 1504-residue polypeptide: DNA-directed RNA polymerase subunit beta' (1504 aa).

Residues cysteine 60, cysteine 62, cysteine 75, and cysteine 78 each coordinate Zn(2+). The interval 265-294 is disordered; the sequence is RKQRDLEDAEQLTGAERERKEYEASQERER. The segment covering 279-294 has biased composition (basic and acidic residues); it reads AERERKEYEASQERER. 3 residues coordinate Mg(2+): aspartate 626, aspartate 628, and aspartate 630. Zn(2+) is bound by residues cysteine 1002, cysteine 1075, cysteine 1082, and cysteine 1085. The segment at 1468 to 1504 is disordered; that stretch reads RALIGGDGDDGERNNGDFDDQVGEDVVIPPDDDDQEA.

The protein belongs to the RNA polymerase beta' chain family. The RNAP catalytic core consists of 2 alpha, 1 beta, 1 beta' and 1 omega subunit. When a sigma factor is associated with the core the holoenzyme is formed, which can initiate transcription. Requires Mg(2+) as cofactor. The cofactor is Zn(2+).

The catalysed reaction is RNA(n) + a ribonucleoside 5'-triphosphate = RNA(n+1) + diphosphate. Functionally, DNA-dependent RNA polymerase catalyzes the transcription of DNA into RNA using the four ribonucleoside triphosphates as substrates. This Roseiflexus sp. (strain RS-1) protein is DNA-directed RNA polymerase subunit beta'.